We begin with the raw amino-acid sequence, 638 residues long: Zinc finger protein 143 (638 aa).

Position 1 is an N-acetylmethionine (Met1). Residue Lys213 forms a Glycyl lysine isopeptide (Lys-Gly) (interchain with G-Cter in SUMO2) linkage. 4 consecutive C2H2-type zinc fingers follow at residues 237 to 261, 267 to 291, 297 to 321, and 327 to 351; these read FRCK…ERSH, YQCE…FRTH, YRCS…IRTH, and FKCP…IRTH. The residue at position 352 (Thr352) is a Phosphothreonine. C2H2-type zinc fingers lie at residues 357-381, 387-411, and 417-440; these read YYCT…VRIH, YVCT…HVVH, and YNCN…RTAH. Residue Lys406 forms a Glycyl lysine isopeptide (Lys-Gly) (interchain with G-Cter in SUMO2) linkage.

This sequence belongs to the GLI C2H2-type zinc-finger protein family. Interacts with CHD8. Forms a complex with HCFC1 and ZNF143.

Its subcellular location is the nucleus. Functionally, transcriptional activator. Activates the gene for selenocysteine tRNA (tRNAsec). Binds to the SPH motif of small nuclear RNA (snRNA) gene promoters. Participates in efficient U6 RNA polymerase III transcription via its interaction with CHD8. In complex with HCFC1 and ZNF143, regulates the expression of several genes, including AP2S1, ESCO2, OPHN1, RBL1, UBXN8 and ZNF32. The sequence is that of Zinc finger protein 143 (Znf143) from Mus musculus (Mouse).